The sequence spans 495 residues: uncharacterized protein (495 aa).

The region spanning 16–74 (SSKRGDLIELAVTALDEDGNGIGTHDGTNVHVIGALPDERVRARLTHVGKRHLHAEAVE) is the TRAM domain. Positions 88, 94, 97, and 175 each coordinate [4Fe-4S] cluster. 4 residues coordinate S-adenosyl-L-methionine: Gln-299, Tyr-328, Glu-349, and Asn-397. The active-site Nucleophile is Cys-424. Residues 472-483 (DRLESPAKERSR) show a composition bias toward basic and acidic residues. Residues 472–495 (DRLESPAKERSRPRASHKAKGGAV) are disordered. The segment covering 484-495 (PRASHKAKGGAV) has biased composition (basic residues).

The protein belongs to the class I-like SAM-binding methyltransferase superfamily. RNA M5U methyltransferase family.

This is an uncharacterized protein from Geobacter sulfurreducens (strain ATCC 51573 / DSM 12127 / PCA).